The primary structure comprises 228 residues: Heptaprenylglyceryl phosphate synthase (228 aa).

Lys-12 is a sn-glycerol 1-phosphate binding site. Asp-14 and Ser-40 together coordinate Mg(2+). Residues 158 to 163, Gly-188, and 208 to 209 contribute to the sn-glycerol 1-phosphate site; these read YLEYSG and GN.

It belongs to the GGGP/HepGP synthase family. Group I subfamily. Homodimer. Mg(2+) is required as a cofactor.

The enzyme catalyses sn-glycerol 1-phosphate + all-trans-heptaprenyl diphosphate = 3-heptaprenyl-sn-glycero-1-phosphate + diphosphate. The protein operates within membrane lipid metabolism; glycerophospholipid metabolism. Functionally, prenyltransferase that catalyzes in vivo the transfer of the heptaprenyl moiety of heptaprenyl pyrophosphate (HepPP; 35 carbon atoms) to the C3 hydroxyl of sn-glycerol-1-phosphate (G1P), producing heptaprenylglyceryl phosphate (HepGP). This reaction is an ether-bond-formation step in the biosynthesis of archaea-type G1P-based membrane lipids found in Bacillales. To a much lesser extent, is also able to use geranyl diphosphate (GPP; C10) and geranylgeranyl diphosphate (GGPP; C20) as the prenyl donors, but not farnesyl pyrophosphate (FPP; C15). Cannot use glycerol-3-phosphate (G3P) or 3-phosphoglycerate (3PG) as an acceptor. The polypeptide is Heptaprenylglyceryl phosphate synthase (Bacillus subtilis (strain 168)).